The following is a 448-amino-acid chain: SVP1-like protein 2 (448 aa).

N-linked (GlcNAc...) asparagine glycans are attached at residues N61, N155, N256, N280, N315, and N421. 2 WD repeats span residues 222–262 (AHKN…LIKE) and 267–306 (VDKADIYEMSFSPNGSKLAVLSNKQTLHIFQIFETTNTET). The interval 416 to 435 (THYSLNESLRNEDTKSAGEP) is disordered. Residues 424–435 (LRNEDTKSAGEP) are compositionally biased toward basic and acidic residues.

This sequence belongs to the WD repeat PROPPIN family. In terms of processing, N-glycosylated.

The protein localises to the endosome membrane. It is found in the prevacuolar compartment membrane. Functionally, involved in piecemeal microautophagy of the nucleus (micronucleophagy). In Saccharomyces cerevisiae (strain ATCC 204508 / S288c) (Baker's yeast), this protein is SVP1-like protein 2 (HSV2).